The following is a 39-amino-acid chain: Cecropin (39 aa).

It localises to the secreted. Its function is as follows. Antibacterial peptide active against Gram-negative bacterium E.coli. Has no activity against Gram-positive bacterium M.luteus. Weakly active against M.luteus. This Calliphora vicina (Blue blowfly) protein is Cecropin.